The following is a 340-amino-acid chain: Phenylalanine--tRNA ligase alpha subunit (340 aa).

Glutamate 255 serves as a coordination point for Mg(2+).

The protein belongs to the class-II aminoacyl-tRNA synthetase family. Phe-tRNA synthetase alpha subunit type 1 subfamily. In terms of assembly, tetramer of two alpha and two beta subunits. Requires Mg(2+) as cofactor.

The protein localises to the cytoplasm. The catalysed reaction is tRNA(Phe) + L-phenylalanine + ATP = L-phenylalanyl-tRNA(Phe) + AMP + diphosphate + H(+). The protein is Phenylalanine--tRNA ligase alpha subunit of Exiguobacterium sibiricum (strain DSM 17290 / CCUG 55495 / CIP 109462 / JCM 13490 / 255-15).